The primary structure comprises 452 residues: Probable receptor-like protein kinase At5g20050 (452 aa).

The N-terminal stretch at 1–23 is a signal peptide; it reads MEDKKANIIATILILALVVVIIA. Residues 24 to 33 lie on the Extracellular side of the membrane; the sequence is ARVSLKLSKT. Residues 34-54 form a helical membrane-spanning segment; it reads FYLIAGVDISLILAVICFLII. Residues 55 to 452 lie on the Cytoplasmic side of the membrane; it reads RSRYNKERKL…SSIISPISPR (398 aa). One can recognise a Protein kinase domain in the interval 103-392; the sequence is DGFRSLIGKG…MVIEMLEGRV (290 aa). Residues 109 to 117 and Lys131 each bind ATP; that span reads IGKGGSGSV. At Tyr178 the chain carries Phosphotyrosine. The active-site Proton acceptor is Asp236. 2 positions are modified to phosphothreonine: Thr270 and Thr275.

This sequence belongs to the protein kinase superfamily. Ser/Thr protein kinase family.

It localises to the membrane. It catalyses the reaction L-seryl-[protein] + ATP = O-phospho-L-seryl-[protein] + ADP + H(+). The enzyme catalyses L-threonyl-[protein] + ATP = O-phospho-L-threonyl-[protein] + ADP + H(+). In Arabidopsis thaliana (Mouse-ear cress), this protein is Probable receptor-like protein kinase At5g20050.